Here is a 157-residue protein sequence, read N- to C-terminus: uncharacterized protein (157 aa).

The first 30 residues, 1 to 30 (MLPEQGPQPSTMPLWCLLAACTSLPRQAAT), serve as a signal peptide directing secretion.

The protein localises to the secreted. This is an uncharacterized protein from Homo sapiens (Human).